A 428-amino-acid chain; its full sequence is Tyrosine--tRNA ligase (428 aa).

Tyrosine 41 lines the L-tyrosine pocket. The 'HIGH' region signature appears at 46–55 (PTADSLHLGH). Residues tyrosine 179 and glutamine 183 each coordinate L-tyrosine. The 'KMSKS' region motif lies at 239 to 243 (KFGKT). Position 242 (lysine 242) interacts with ATP. Residues 361 to 418 (ADLLQALVDSELQPSRGQARKTVASNAVTINGEKQADPEYVFSDSDRLFGRYTLLRRG) form the S4 RNA-binding domain.

Belongs to the class-I aminoacyl-tRNA synthetase family. TyrS type 1 subfamily. As to quaternary structure, homodimer.

The protein resides in the cytoplasm. It carries out the reaction tRNA(Tyr) + L-tyrosine + ATP = L-tyrosyl-tRNA(Tyr) + AMP + diphosphate + H(+). Its function is as follows. Catalyzes the attachment of tyrosine to tRNA(Tyr) in a two-step reaction: tyrosine is first activated by ATP to form Tyr-AMP and then transferred to the acceptor end of tRNA(Tyr). In Klebsiella pneumoniae subsp. pneumoniae (strain ATCC 700721 / MGH 78578), this protein is Tyrosine--tRNA ligase.